Reading from the N-terminus, the 212-residue chain is ATP synthase F(0) complex subunit a (212 aa).

Helical transmembrane passes span 3-23 (MMGI…IYTS), 58-78 (WAAM…LGLL), 87-107 (QLSM…LTGL), 128-148 (IPLL…ALGV), 169-189 (FVLL…LVLL), and 192-212 (LEIA…TLYL).

The protein belongs to the ATPase A chain family. As to quaternary structure, component of the ATP synthase complex composed at least of ATP5F1A/subunit alpha, ATP5F1B/subunit beta, ATP5MC1/subunit c (homooctomer), MT-ATP6/subunit a, MT-ATP8/subunit 8, ATP5ME/subunit e, ATP5MF/subunit f, ATP5MG/subunit g, ATP5MK/subunit k, ATP5MJ/subunit j, ATP5F1C/subunit gamma, ATP5F1D/subunit delta, ATP5F1E/subunit epsilon, ATP5PF/subunit F6, ATP5PB/subunit b, ATP5PD/subunit d, ATP5PO/subunit OSCP. ATP synthase complex consists of a soluble F(1) head domain (subunits alpha(3) and beta(3)) - the catalytic core - and a membrane F(0) domain - the membrane proton channel (subunits c, a, 8, e, f, g, k and j). These two domains are linked by a central stalk (subunits gamma, delta, and epsilon) rotating inside the F1 region and a stationary peripheral stalk (subunits F6, b, d, and OSCP). Interacts with DNAJC30; interaction is direct.

The protein resides in the mitochondrion inner membrane. The catalysed reaction is H(+)(in) = H(+)(out). Subunit a, of the mitochondrial membrane ATP synthase complex (F(1)F(0) ATP synthase or Complex V) that produces ATP from ADP in the presence of a proton gradient across the membrane which is generated by electron transport complexes of the respiratory chain. ATP synthase complex consist of a soluble F(1) head domain - the catalytic core - and a membrane F(1) domain - the membrane proton channel. These two domains are linked by a central stalk rotating inside the F(1) region and a stationary peripheral stalk. During catalysis, ATP synthesis in the catalytic domain of F(1) is coupled via a rotary mechanism of the central stalk subunits to proton translocation. With the subunit c (ATP5MC1), forms the proton-conducting channel in the F(0) domain, that contains two crucial half-channels (inlet and outlet) that facilitate proton movement from the mitochondrial intermembrane space (IMS) into the matrix. Protons are taken up via the inlet half-channel and released through the outlet half-channel, following a Grotthuss mechanism. The chain is ATP synthase F(0) complex subunit a from Tropidurus hispidus (Peters' lava lizard).